The sequence spans 411 residues: MNALAATNRNFRHASRILGLDSKIERSLMIPFREIKVECTIPKDDGTLVSYIGFRVQHDNARGPMKGGIRYHPEVDPDEVNALAQLMTWKTAVADIPYGGAKGGIGCSPRDLSLSELERLTRVFTQKIHDLIGIHTDVPAPDMGTNAQTMAWILDEYSKFHGHSPAVVTGKPIDLGGSLGREAATGRGVVFATEALLAEYGKSIQGLTFVIQGFGNVGTWAAKLIHEKGGKVVAVSDITGAIRNPEGIDINALIKHKDATGSLNDFNGGDAMNSDELLIHECDVLIPCALGGVLNKENAGDVKAKFIVEAANHPTDPDADEILSKKGVIILPDIYANAGGVTVSYFEWVQNIQGFMWEEEKVNLELQKYMTRAFHNIKTMCHTHSCNLRMGAFTLGVNRVARATQLRGWEA.

Residue Lys-102 is part of the active site.

Belongs to the Glu/Leu/Phe/Val dehydrogenases family.

Its subcellular location is the mitochondrion. The catalysed reaction is L-glutamate + NAD(+) + H2O = 2-oxoglutarate + NH4(+) + NADH + H(+). It catalyses the reaction L-glutamate + NADP(+) + H2O = 2-oxoglutarate + NH4(+) + NADPH + H(+). In Arabidopsis thaliana (Mouse-ear cress), this protein is Glutamate dehydrogenase 2 (GDH2).